The sequence spans 416 residues: Gamma-glutamyl phosphate reductase (416 aa).

The protein belongs to the gamma-glutamyl phosphate reductase family.

It is found in the cytoplasm. It carries out the reaction L-glutamate 5-semialdehyde + phosphate + NADP(+) = L-glutamyl 5-phosphate + NADPH + H(+). Its pathway is amino-acid biosynthesis; L-proline biosynthesis; L-glutamate 5-semialdehyde from L-glutamate: step 2/2. Catalyzes the NADPH-dependent reduction of L-glutamate 5-phosphate into L-glutamate 5-semialdehyde and phosphate. The product spontaneously undergoes cyclization to form 1-pyrroline-5-carboxylate. The chain is Gamma-glutamyl phosphate reductase from Vibrio vulnificus (strain YJ016).